Here is a 216-residue protein sequence, read N- to C-terminus: Glycerol uptake facilitator protein-like 6 (216 aa).

The next 2 helical transmembrane spans lie at 5-25 (LAEF…VVIA) and 30-50 (LAIG…FGGI). Positions 56-58 (NPA) match the NPA 1 motif. The next 3 helical transmembrane spans lie at 72–92 (ADAI…SAAV), 114–134 (IGSG…LMVI), and 147–167 (FAGL…LNLT). Positions 172 to 174 (NPA) match the NPA 2 motif. Residues 191–213 (LWVYILAPEVGAILAAFCARVMG) form a helical membrane-spanning segment.

This sequence belongs to the MIP/aquaporin (TC 1.A.8) family.

The protein resides in the cell membrane. In terms of biological role, probable transporter that facilitates the transmembrane diffusion of an unknown substrate. Is not permeable to water, dihydroxyacetone, glycerol, urea, H(2)O(2) and D/L-lactic acid. The chain is Glycerol uptake facilitator protein-like 6 from Lactiplantibacillus plantarum (strain ATCC BAA-793 / NCIMB 8826 / WCFS1) (Lactobacillus plantarum).